The sequence spans 338 residues: Dihydroorotate dehydrogenase (quinone) (338 aa).

FMN is bound by residues 59–63 (AGLDK) and Thr83. Position 63 (Lys63) interacts with substrate. 108 to 112 (NRMGF) lines the substrate pocket. FMN-binding residues include Asn136 and Asn169. Asn169 is a binding site for substrate. Ser172 functions as the Nucleophile in the catalytic mechanism. Substrate is bound at residue Asn174. Positions 214 and 242 each coordinate FMN. Substrate is bound at residue 243 to 244 (NT). FMN contacts are provided by residues Gly265, Gly294, and 315–316 (YS).

The protein belongs to the dihydroorotate dehydrogenase family. Type 2 subfamily. As to quaternary structure, monomer. Requires FMN as cofactor.

It is found in the cell membrane. The catalysed reaction is (S)-dihydroorotate + a quinone = orotate + a quinol. The protein operates within pyrimidine metabolism; UMP biosynthesis via de novo pathway; orotate from (S)-dihydroorotate (quinone route): step 1/1. Its function is as follows. Catalyzes the conversion of dihydroorotate to orotate with quinone as electron acceptor. This Azoarcus sp. (strain BH72) protein is Dihydroorotate dehydrogenase (quinone).